Consider the following 73-residue polypeptide: uncharacterized protein (73 aa).

The signal sequence occupies residues 1 to 28; the sequence is MKFLLSVIAGLLILALYLFWKVQPPVWI.

This is an uncharacterized protein from Bacillus subtilis (strain 168).